The sequence spans 303 residues: Probable 5-dehydro-4-deoxyglucarate dehydratase (303 aa).

This sequence belongs to the DapA family.

The enzyme catalyses 5-dehydro-4-deoxy-D-glucarate + H(+) = 2,5-dioxopentanoate + CO2 + H2O. The protein operates within carbohydrate acid metabolism; D-glucarate degradation; 2,5-dioxopentanoate from D-glucarate: step 2/2. This Acinetobacter baumannii (strain AB307-0294) protein is Probable 5-dehydro-4-deoxyglucarate dehydratase.